A 291-amino-acid polypeptide reads, in one-letter code: ATP phosphoribosyltransferase (291 aa).

Belongs to the ATP phosphoribosyltransferase family. Long subfamily. Requires Mg(2+) as cofactor.

Its subcellular location is the cytoplasm. It catalyses the reaction 1-(5-phospho-beta-D-ribosyl)-ATP + diphosphate = 5-phospho-alpha-D-ribose 1-diphosphate + ATP. Its pathway is amino-acid biosynthesis; L-histidine biosynthesis; L-histidine from 5-phospho-alpha-D-ribose 1-diphosphate: step 1/9. Its activity is regulated as follows. Feedback inhibited by histidine. Catalyzes the condensation of ATP and 5-phosphoribose 1-diphosphate to form N'-(5'-phosphoribosyl)-ATP (PR-ATP). Has a crucial role in the pathway because the rate of histidine biosynthesis seems to be controlled primarily by regulation of HisG enzymatic activity. This chain is ATP phosphoribosyltransferase, found in Geotalea uraniireducens (strain Rf4) (Geobacter uraniireducens).